We begin with the raw amino-acid sequence, 272 residues long: Ribosomal RNA small subunit methyltransferase A (272 aa).

S-adenosyl-L-methionine contacts are provided by Asn-20, Leu-22, Gly-47, Glu-68, Asp-93, and Asn-114.

It belongs to the class I-like SAM-binding methyltransferase superfamily. rRNA adenine N(6)-methyltransferase family. RsmA subfamily.

The protein localises to the cytoplasm. It catalyses the reaction adenosine(1518)/adenosine(1519) in 16S rRNA + 4 S-adenosyl-L-methionine = N(6)-dimethyladenosine(1518)/N(6)-dimethyladenosine(1519) in 16S rRNA + 4 S-adenosyl-L-homocysteine + 4 H(+). In terms of biological role, specifically dimethylates two adjacent adenosines (A1518 and A1519) in the loop of a conserved hairpin near the 3'-end of 16S rRNA in the 30S particle. May play a critical role in biogenesis of 30S subunits. The polypeptide is Ribosomal RNA small subunit methyltransferase A (Aliivibrio fischeri (strain ATCC 700601 / ES114) (Vibrio fischeri)).